We begin with the raw amino-acid sequence, 111 residues long: UPF0060 membrane protein CPR_1507 (111 aa).

Transmembrane regions (helical) follow at residues 7–27 (IFYFLLAGVFEIGGGYLIWLW), 33–53 (SLIYGIIGALVLILYGIIPTL), 60–80 (FGRVYATYGGIFIVLSILCGW), and 85–105 (IIPDKFDLIGGFIALIGVLII).

Belongs to the UPF0060 family.

Its subcellular location is the cell membrane. This is UPF0060 membrane protein CPR_1507 from Clostridium perfringens (strain SM101 / Type A).